The following is a 184-amino-acid chain: Ribosome maturation factor RimM (184 aa).

The PRC barrel domain occupies 105-184 (EDEFYWRELF…RIEVDWDPAF (80 aa)).

The protein belongs to the RimM family. In terms of assembly, binds ribosomal protein uS19.

The protein localises to the cytoplasm. Its function is as follows. An accessory protein needed during the final step in the assembly of 30S ribosomal subunit, possibly for assembly of the head region. Essential for efficient processing of 16S rRNA. May be needed both before and after RbfA during the maturation of 16S rRNA. It has affinity for free ribosomal 30S subunits but not for 70S ribosomes. In Vibrio cholerae serotype O1 (strain ATCC 39541 / Classical Ogawa 395 / O395), this protein is Ribosome maturation factor RimM.